Here is a 343-residue protein sequence, read N- to C-terminus: DNA polymerase III subunit delta (343 aa).

3 domain regions span residues 1-140, 141-210, and 211-343; these read MIRL…VTCQ, TPEQ…NDAA, and HFTP…FIDG.

The protein belongs to the DNA polymerase HolA subunit family. The DNA polymerase III holoenzyme complex contains at least 10 different subunits organized into 3 functionally essential subassemblies: the Pol III core, the beta sliding clamp processivity factor and the clamp-loading complex. The Pol III core (subunits alpha, epsilon and theta) contains the polymerase and the 3'-5' exonuclease proofreading activities. The polymerase is tethered to the template via the dimeric beta sliding clamp processivity factor. The clamp-loading complex (also called gamma complex) assembles the beta sliding clamp onto the primed template and plays a central role in the organization and communication at the replication fork. The clamp-loading complex contains delta, delta', psi and chi, and 3 copies of either or both of two different DnaX proteins, gamma and tau. The DNA replisome complex has a single clamp loader (3 tau and 1 each of delta, delta', psi and chi subunits) which binds 3 Pol III cores (1 core on the leading strand and 2 on the lagging strand) each with a beta sliding clamp dimer. Additional proteins in the replisome are other copies of gamma, psi and chi, Ssb, DNA helicase and RNA primase. The clamp loader hydrolyzes ATP to assemble the beta processivity factor onto the primed template and plays a central role in the organization and communication at the replication fork; the minimal complex to load the beta sliding clamp on DNA is delta, delta', gamma.

The enzyme catalyses DNA(n) + a 2'-deoxyribonucleoside 5'-triphosphate = DNA(n+1) + diphosphate. Part of the beta sliding clamp loading complex, which hydrolyzes ATP to load the beta clamp onto primed DNA to form the DNA replication pre-initiation complex. DNA polymerase III is a complex, multichain enzyme responsible for most of the replicative synthesis in bacteria. This DNA polymerase also exhibits 3'-5' exonuclease activity. The delta subunit is the wrench that will open the beta subunit dimer, which has been modeled to leave a gap large enough for ssDNA to pass through. The gamma complex (gamma(3),delta,delta') is thought to load beta dimers onto DNA by binding ATP which alters the complex's conformation so it can bind beta sliding clamp dimers and open them at one interface. Primed DNA is recognized, ATP is hydrolyzed releasing the gamma complex and closing the beta sliding clamp ring around the primed DNA. The sequence is that of DNA polymerase III subunit delta (holA) from Escherichia coli (strain K12).